The primary structure comprises 333 residues: tRNA N6-adenosine threonylcarbamoyltransferase (333 aa).

Fe cation-binding residues include H110 and H114. Substrate-binding positions include 133–137, D166, G179, D183, and N275; that span reads IVSGG. D302 contacts Fe cation.

The protein belongs to the KAE1 / TsaD family. It depends on Fe(2+) as a cofactor.

Its subcellular location is the cytoplasm. The enzyme catalyses L-threonylcarbamoyladenylate + adenosine(37) in tRNA = N(6)-L-threonylcarbamoyladenosine(37) in tRNA + AMP + H(+). Functionally, required for the formation of a threonylcarbamoyl group on adenosine at position 37 (t(6)A37) in tRNAs that read codons beginning with adenine. Is involved in the transfer of the threonylcarbamoyl moiety of threonylcarbamoyl-AMP (TC-AMP) to the N6 group of A37, together with TsaE and TsaB. TsaD likely plays a direct catalytic role in this reaction. This chain is tRNA N6-adenosine threonylcarbamoyltransferase, found in Thermodesulfovibrio yellowstonii (strain ATCC 51303 / DSM 11347 / YP87).